The sequence spans 513 residues: Cytochrome P450 4d10 (513 aa).

The heme site is built by Glu317 and Cys457.

The protein belongs to the cytochrome P450 family. Requires heme as cofactor.

It is found in the endoplasmic reticulum membrane. The protein localises to the microsome membrane. Functionally, may play an important role in the maintenance of specific insect-host plant relationships. May be involved in xenobiotic metabolism. The sequence is that of Cytochrome P450 4d10 (Cyp4d10) from Drosophila mettleri (Fruit fly).